The chain runs to 670 residues: Solute carrier organic anion transporter family member 1A1 (670 aa).

The Cytoplasmic segment spans residues 1–20 (MEETEKKVATQEGRFFSKMK). The chain crosses the membrane as a helical span at residues 21 to 40 (VFLMSLTCAYLAKSLSGVYM). The Extracellular portion of the chain corresponds to 41–59 (NSMLTQIERQFGIPTSVVG). A helical transmembrane segment spans residues 60-80 (FITGSFEIGNLLLIVFVSYFG). Over 81 to 86 (RKLHRP) the chain is Cytoplasmic. The chain crosses the membrane as a helical span at residues 87–111 (IIIGVGCVVMGLGCFLMASPHFLMG). The Extracellular segment spans residues 112 to 155 (RYKYETTISPTSNLSSNSFLCIENRTQTLKPTQDPTECVKEIKS). N-linked (GlcNAc...) asparagine glycosylation is found at Asn-124 and Asn-135. A helical membrane pass occupies residues 156–184 (LMWIYVLIGNTMRGIGETPIMPLGISYIE). Residues 185-203 (DFAKSENSPLYIGILEMGK) lie on the Cytoplasmic side of the membrane. A helical transmembrane segment spans residues 204–224 (IVGPIIGLLLGSFFARVYVDI). At 225–242 (GSVNTDDLTITPTDTRWV) the chain is on the extracellular side. Residues 243–267 (GAWWIGFLVCAGVNILTSIPFFFFP) form a helical membrane-spanning segment. Residues 268–311 (KTLPKKELQDNVDVTKYEKVEKHRERAKKENLGITKDFLPFMKS) are Cytoplasmic-facing. Residues 312 to 333 (LCCNPIYMLFSLTSVLQINGFA) traverse the membrane as a helical segment. The Extracellular segment spans residues 334–353 (STFTFLPKYLEQQYGKSTSE). Residues 354–377 (AVFLIGVYSLPPVCLGYLISGFIM) form a helical membrane-spanning segment. Over 378–381 (KKFK) the chain is Cytoplasmic. Residues 382–405 (ITVKKAAYIAFGLSLSEYFIFLCN) traverse the membrane as a helical segment. The Extracellular portion of the chain corresponds to 406–513 (YLLTCDNFPV…PECDNKLQYF (108 aa)). The Kazal-like domain maps to 433 to 488 (KNVLADCNTRCSCLTDTWDPVCGDNGLAYMSACLAGCEKSVGTGTNMVFQNCSCIG). Disulfide bonds link Cys-439–Cys-469, Cys-445–Cys-465, and Cys-454–Cys-486. N-linked (GlcNAc...) asparagine glycosylation is found at Asn-483 and Asn-492. A helical transmembrane segment spans residues 514 to 536 (LIKSVFSSFIFSLAAIPGYMVLL). Over 537 to 545 (RCVKSEEKS) the chain is Cytoplasmic. The helical transmembrane segment at 546–571 (IGVGLHAFFIRLLAGIPAPVYFGALI) threads the bilayer. Topologically, residues 572 to 605 (DRTCLHWGTLKCGQPGACRMYDINRFRHIYLGLP) are extracellular. Residues 606-623 (AAVRGSSFLPAVFILILM) traverse the membrane as a helical segment. Residues 624 to 670 (RKFHFPGDIHSPDTELAEMKLTEKESECTDVCRSPKVENDGELKTKL) lie on the Cytoplasmic side of the membrane. Residue Ser-634 is modified to Phosphoserine.

It belongs to the organo anion transporter (TC 2.A.60) family. As to quaternary structure, binds to PDZK1. Interaction with PDZK1 is required for expression on hepatocyte surface. Highly expressed in liver, and at lower levels in kidney. Not detected in other tissues.

Its subcellular location is the basolateral cell membrane. The catalysed reaction is estrone 3-sulfate(out) + hydrogencarbonate(in) = estrone 3-sulfate(in) + hydrogencarbonate(out). It catalyses the reaction taurocholate(out) + hydrogencarbonate(in) = taurocholate(in) + hydrogencarbonate(out). The enzyme catalyses L-thyroxine(out) = L-thyroxine(in). It carries out the reaction prostaglandin E2(out) = prostaglandin E2(in). The catalysed reaction is 17beta-estradiol 17-O-(beta-D-glucuronate)(out) = 17beta-estradiol 17-O-(beta-D-glucuronate)(in). It catalyses the reaction dehydroepiandrosterone 3-sulfate(out) = dehydroepiandrosterone 3-sulfate(in). Functionally, mediates the Na(+)-independent transport of organic anions such as steroid sulfate conjugates (dehydroepiandrosterone sulfate (DHEAS), 17-beta-glucuronosyl estradiol, estrone-3-sulfate), conjugated (taurocholate) and unconjugated (cholate) bile acids, prostaglandin E2 (PGE2) and L-thyroxine T4. Also capable of transporting sulfobromophthalein (BSP), ouabain and gadoxetate. Hydrogencarbonate/HCO3(-) acts as the probable counteranion that exchanges for organic anions. Shows a pH-sensitive substrate specificity which may be ascribed to the protonation state of the binding site and leads to a stimulation of substrate transport in an acidic microenvironment. This is Solute carrier organic anion transporter family member 1A1 from Mus musculus (Mouse).